The chain runs to 487 residues: Ribulose bisphosphate carboxylase large chain (487 aa).

Residues Asn-127 and Thr-177 each contribute to the substrate site. Lys-179 (proton acceptor) is an active-site residue. Lys-181 lines the substrate pocket. Mg(2+)-binding residues include Lys-205, Asp-207, and Glu-208. Lys-205 carries the post-translational modification N6-carboxylysine. The active-site Proton acceptor is the His-297. The substrate site is built by Arg-298, His-330, and Ser-382.

The protein belongs to the RuBisCO large chain family. Type I subfamily. In terms of assembly, heterohexadecamer of 8 large chains and 8 small chains. Mg(2+) serves as cofactor.

The catalysed reaction is 2 (2R)-3-phosphoglycerate + 2 H(+) = D-ribulose 1,5-bisphosphate + CO2 + H2O. It carries out the reaction D-ribulose 1,5-bisphosphate + O2 = 2-phosphoglycolate + (2R)-3-phosphoglycerate + 2 H(+). In terms of biological role, ruBisCO catalyzes two reactions: the carboxylation of D-ribulose 1,5-bisphosphate, the primary event in carbon dioxide fixation, as well as the oxidative fragmentation of the pentose substrate. Both reactions occur simultaneously and in competition at the same active site. The chain is Ribulose bisphosphate carboxylase large chain from Paracoccus denitrificans (strain Pd 1222).